The sequence spans 141 residues: MTSSAPTLPDVTIRNVSRHIQMSLMGKGEPPWLCRLQLEPLLQAMEEQQLGNLEARWEVEKHGNEVSGSTSREVWEDADFICPVLKQCTNPKLNENKNIHQAKECEKSPFLSLSPHQQWKPGLPRRNDALPTSLCLCCSEN.

This is an uncharacterized protein from Homo sapiens (Human).